A 100-amino-acid chain; its full sequence is Noncompact myelin-associated protein (100 aa).

Residues 1–28 are Extracellular-facing; the sequence is MTTATTLGDAVFSLNMTRGEDILYKSSG. Residues 29 to 49 traverse the membrane as a helical segment; sequence AIVAAIVVVVVIIVTLVLILL. The Cytoplasmic portion of the chain corresponds to 50–100; that stretch reads KMYNRRMRTRRELEPKSPKPPVPPALDPNSNGSQQPAAVTSDPADVPVETR. Residues 58-100 are disordered; sequence TRRELEPKSPKPPVPPALDPNSNGSQQPAAVTSDPADVPVETR. Positions 77–87 are enriched in polar residues; sequence PNSNGSQQPAA.

Glycosylated. In terms of tissue distribution, expressed in the peripheral nervous system Schwann cells (at protein level).

It localises to the cell membrane. Functionally, plays a role in myelin formation. The polypeptide is Noncompact myelin-associated protein (Ncmap) (Rattus norvegicus (Rat)).